Reading from the N-terminus, the 174-residue chain is Amino-acid acetyltransferase (174 aa).

One can recognise an N-acetyltransferase domain in the interval Pro10 to Asp148.

The protein belongs to the acetyltransferase family. In terms of assembly, homodimer and homotetramer.

It catalyses the reaction L-glutamate + acetyl-CoA = N-acetyl-L-glutamate + CoA + H(+). The protein operates within amino-acid biosynthesis; L-arginine biosynthesis; N(2)-acetyl-L-ornithine from L-glutamate: step 1/4. Inhibited by L-arginine. In terms of biological role, catalyzes the conversion of L-glutamate to alpha-N-acetyl-L-glutamate. L-glutamine is a significantly better substrate compared to L-glutamate. This Mycobacterium tuberculosis (strain ATCC 25618 / H37Rv) protein is Amino-acid acetyltransferase (argA).